A 408-amino-acid chain; its full sequence is UPF0754 membrane protein Tery_3973 (408 aa).

The next 2 membrane-spanning stretches (helical) occupy residues 4–24 and 385–405; these read IWLY…TNDI and IVNL…ILLV.

The protein belongs to the UPF0754 family.

It is found in the cell inner membrane. This Trichodesmium erythraeum (strain IMS101) protein is UPF0754 membrane protein Tery_3973.